We begin with the raw amino-acid sequence, 495 residues long: Probable plastidic glucose transporter 3 (495 aa).

The next 12 membrane-spanning stretches (helical) occupy residues 55 to 75 (LPHV…LGVV), 97 to 117 (LVVS…GLVA), 131 to 151 (LPMI…GMLL), 154 to 174 (FLVG…VTEV), 183 to 203 (YGSS…FAGI), 214 to 234 (ICFW…ELCV), 294 to 314 (VVFI…NAVF), 330 to 350 (SANI…VVLM), 357 to 377 (VLLI…AIAY), 384 to 404 (FGTL…FATG), 425 to 445 (ALAV…LLFL), and 451 to 471 (LGSV…VIFV).

This sequence belongs to the major facilitator superfamily. Sugar transporter (TC 2.A.1.1) family.

It localises to the plastid. The protein resides in the chloroplast membrane. Its function is as follows. May be involved in the efflux of glucose towards the cytosol. This Arabidopsis thaliana (Mouse-ear cress) protein is Probable plastidic glucose transporter 3.